We begin with the raw amino-acid sequence, 278 residues long: Large ribosomal subunit protein uL2 (278 aa).

Residues 223 to 278 (GVAMNPIDHPHGGGEGRTSGGRHPVTPWGFPTKGKKTRSNKRTDTFIVSSRHNRKK) are disordered.

Belongs to the universal ribosomal protein uL2 family. As to quaternary structure, part of the 50S ribosomal subunit. Forms a bridge to the 30S subunit in the 70S ribosome.

Functionally, one of the primary rRNA binding proteins. Required for association of the 30S and 50S subunits to form the 70S ribosome, for tRNA binding and peptide bond formation. It has been suggested to have peptidyltransferase activity; this is somewhat controversial. Makes several contacts with the 16S rRNA in the 70S ribosome. This Methylobacterium sp. (strain 4-46) protein is Large ribosomal subunit protein uL2.